The following is a 96-amino-acid chain: ATP synthase subunit f, mitochondrial (96 aa).

It belongs to the ATPase F chain family.

It localises to the mitochondrion. The protein localises to the mitochondrion inner membrane. Its function is as follows. Mitochondrial membrane ATP synthase (F(1)F(0) ATP synthase or Complex V) produces ATP from ADP in the presence of a proton gradient across the membrane which is generated by electron transport complexes of the respiratory chain. F-type ATPases consist of two structural domains, F(1) - containing the extramembraneous catalytic core and F(0) - containing the membrane proton channel, linked together by a central stalk and a peripheral stalk. During catalysis, ATP synthesis in the catalytic domain of F(1) is coupled via a rotary mechanism of the central stalk subunits to proton translocation. In Schizosaccharomyces pombe (strain 972 / ATCC 24843) (Fission yeast), this protein is ATP synthase subunit f, mitochondrial (atp17).